Here is a 206-residue protein sequence, read N- to C-terminus: Cytochrome c oxidase assembly protein CtaG (206 aa).

The Cytoplasmic segment spans residues 1–17 (MPEVQPSALPKPAPRLG). A helical; Signal-anchor for type II membrane protein transmembrane segment spans residues 18–40 (RDAAVASICGFVVALMVGASFAA). The Periplasmic portion of the chain corresponds to 41-206 (VPFYDWFCRT…GEPDQRKGNL (166 aa)).

The protein belongs to the COX11/CtaG family.

The protein localises to the cell inner membrane. Functionally, exerts its effect at some terminal stage of cytochrome c oxidase synthesis, probably by being involved in the insertion of the copper B into subunit I. This is Cytochrome c oxidase assembly protein CtaG from Rhodopseudomonas palustris (strain BisB5).